The following is a 495-amino-acid chain: UDP-N-acetylmuramate--L-alanine ligase (495 aa).

An ATP-binding site is contributed by 153–159 (GTHGKTT).

This sequence belongs to the MurCDEF family.

It is found in the cytoplasm. The enzyme catalyses UDP-N-acetyl-alpha-D-muramate + L-alanine + ATP = UDP-N-acetyl-alpha-D-muramoyl-L-alanine + ADP + phosphate + H(+). It participates in cell wall biogenesis; peptidoglycan biosynthesis. In terms of biological role, cell wall formation. The sequence is that of UDP-N-acetylmuramate--L-alanine ligase from Gloeothece citriformis (strain PCC 7424) (Cyanothece sp. (strain PCC 7424)).